We begin with the raw amino-acid sequence, 1073 residues long: MSSGNTSSQNHSPVNNQPTRLKSPLPALHKDTQPNTSHQATNVLQAIEHARHFLPAQGPISVFVHHNTLHAFEDLPFEKAVIEGGRRFGCEPYLSEERYHQELLRGRISREDLREVLMADLQDDADKLVATFGTRYTLRLSMLQTELQPMPESGLSWVLAESELLKRFREEVPAPYREKTITQTRGWVMRHLEPITTDTTSSNPASPLPAPLQDRLKAAGESQIHRWNDQQWESFTLHALWETCQQGVEKAEVQTPNTASNDSLHRLMRGELGIDLKTKIDDVLIRFCGCFLDQGFADWKLPERENGFAKAFADLYLGRWAIRADWMKHVDASLREVQSPDWDAIQSIEQSLERMGISNNECEGFLSECLLSLRGWAGMIWQMETNGPFLANPIPEGSLNEYLAIRLILLAHAIEHFGKAKFNVGTASEILRLALKSADVRSASSVRSRTHTVFQLAQLGGWTPEQMLNMSSAQWRCLITEIESFASLDRRRLLHAAYERHYANQALDAISIHSRRRRELATNSRRRPAYAAIFCIDDREESFRRHLEEVAPDCRTASAAGFFAVAMYYQGADHASFRPLCPAIVKPQHYVREEPLFSSMAAGERRAVRRRRLGWFAHQVHQNSRTLIGGWVTGLFGAIATVPMVARILAPRLTSQIRESMGSLVRPPATELHLERLADAPGSDPASMGYSLDEMSQIVVRILQDIGMVDAFPPIIVFFGHGSGSLNNPHESAYNCGACSGGRGGPNARAFAVMANDPRVRRRVAEQGIELPDEVRFVGAYHNTCNDDVDYYDLDLLPRSLRELFRRIESDVIETRARNAHERARRFESAPLDLTPQEALEHVEERAEDLSQARPEYNHATNALVTVGRRDWSRGLFMDRRAFVTEYDPTVDDENGHILTRILQAAIPVCGGISLEYYFSTVDVEGYGCGSKLPHNVASMVGVMTGAASDLRPGLSQQMVEIHEPMRILFVIETTPEMLKKIISENEGIRRMVEGNWVQLAILDPSTYTIQRYIDGHFEPHVVTDREIPTVQSSMHWYRGQRDHLGFATIQESEIKTPVSSSESDANTSEVLV.

A compositionally biased stretch (polar residues) spans 1 to 20; the sequence is MSSGNTSSQNHSPVNNQPTR. A disordered region spans residues 1–35; that stretch reads MSSGNTSSQNHSPVNNQPTRLKSPLPALHKDTQPN. 4 residues coordinate Zn(2+): cysteine 535, aspartate 537, histidine 721, and cysteine 736.

It belongs to the inorganic carbon transporter (TC 9.A.2) DabA family. Forms a complex with DabB. Zn(2+) serves as cofactor.

It is found in the cell inner membrane. Its function is as follows. Part of an energy-coupled inorganic carbon pump. In Rhodopirellula baltica (strain DSM 10527 / NCIMB 13988 / SH1), this protein is Probable inorganic carbon transporter subunit DabA 2.